We begin with the raw amino-acid sequence, 167 residues long: NAD(P)H-quinone oxidoreductase subunit I, chloroplastic (167 aa).

4Fe-4S ferredoxin-type domains are found at residues 55-84 and 95-124; these read GRIHFEFDKCIACEVCVRVCPIDLPVVDWK and LNYSIDFGICIFCGNCVEYCPTNCLSMTEE. 8 residues coordinate [4Fe-4S] cluster: cysteine 64, cysteine 67, cysteine 70, cysteine 74, cysteine 104, cysteine 107, cysteine 110, and cysteine 114.

The protein belongs to the complex I 23 kDa subunit family. In terms of assembly, NDH is composed of at least 16 different subunits, 5 of which are encoded in the nucleus. Requires [4Fe-4S] cluster as cofactor.

Its subcellular location is the plastid. It localises to the chloroplast thylakoid membrane. It carries out the reaction a plastoquinone + NADH + (n+1) H(+)(in) = a plastoquinol + NAD(+) + n H(+)(out). It catalyses the reaction a plastoquinone + NADPH + (n+1) H(+)(in) = a plastoquinol + NADP(+) + n H(+)(out). Its function is as follows. NDH shuttles electrons from NAD(P)H:plastoquinone, via FMN and iron-sulfur (Fe-S) centers, to quinones in the photosynthetic chain and possibly in a chloroplast respiratory chain. The immediate electron acceptor for the enzyme in this species is believed to be plastoquinone. Couples the redox reaction to proton translocation, and thus conserves the redox energy in a proton gradient. The sequence is that of NAD(P)H-quinone oxidoreductase subunit I, chloroplastic from Solanum tuberosum (Potato).